The following is a 152-amino-acid chain: Plant UBX domain-containing protein 12 (152 aa).

The tract at residues 32 to 61 (KRFSEEESEETENTTNSSNAVFGFPNLPEE) is disordered. Residues 67 to 150 (DQSVLCRICV…GLANSLVSVT (84 aa)) enclose the UBX domain.

The protein is Plant UBX domain-containing protein 12 of Arabidopsis thaliana (Mouse-ear cress).